Reading from the N-terminus, the 414-residue chain is FAD-dependent monooxygenase adaC (414 aa).

FAD-binding residues include Glu32, Ala43, Arg115, Asp325, and Gly338.

The protein belongs to the paxM FAD-dependent monooxygenase family. Requires FAD as cofactor.

It carries out the reaction 3-(2,4-dioxopentyl)-3,6,8,9-tetrahydroxy-1-oxo-1,2,3,4-tetrahydroanthracene-2-carboxyl-[ACP] + NADPH + O2 + H(+) = 3-(2,4-dioxopentyl)-2,3,6,8,9-pentahydroxy-1-oxo-1,2,3,4-tetrahydroanthracene-2-carboxyl-[ACP] + NADP(+) + H2O. It participates in secondary metabolite biosynthesis. FAD-dependent monooxygenase; part of the gene cluster that mediates the biosynthesis of the linear tetracyclic TAN-1612 neuropeptide Y receptor antagonist. The decaketide backbone of TAN-1612 is synthesized by the non-reducing polyketide synthase adaA via condensation of one acetyl-CoA starter unit with 9 malonyl-CoA units. The FAD-dependent monooxygenase adaC then performs hydroxylation at C2 while the polaketide chain is still attached to the NRPKS adaA. The alpha-hydroxylation step at C2 appears to be crucial for the following C18-C1 Claisen cyclization and release of the C9-hydroxyl version of TAN-1612 from the NRPKS adaA, two steps performed by the lactamase-like protein adaB. Finally, the O-methyltransferase adaD performs the C9 O-methylation to complete the biosynthesis of TAN-1612. The chain is FAD-dependent monooxygenase adaC from Aspergillus niger.